A 145-amino-acid polypeptide reads, in one-letter code: Acidic phospholipase A2 1 (145 aa).

The signal sequence occupies residues 1 to 21 (MYPAHLLVLLAVCVSLLGATA). The propeptide occupies 22-27 (IPPLPL). Cystine bridges form between Cys-38-Cys-98, Cys-54-Cys-144, Cys-56-Cys-72, Cys-71-Cys-125, Cys-78-Cys-118, Cys-87-Cys-111, and Cys-105-Cys-116. Positions 55, 57, and 59 each coordinate Ca(2+). The active site involves His-75. Asp-76 serves as a coordination point for Ca(2+). The active site involves Asp-119.

The protein belongs to the phospholipase A2 family. Group I subfamily. D49 sub-subfamily. Monomer. The cofactor is Ca(2+). In terms of tissue distribution, expressed by the venom gland.

Its subcellular location is the secreted. The enzyme catalyses a 1,2-diacyl-sn-glycero-3-phosphocholine + H2O = a 1-acyl-sn-glycero-3-phosphocholine + a fatty acid + H(+). Its function is as follows. PLA2 catalyzes the calcium-dependent hydrolysis of the 2-acyl groups in 3-sn-phosphoglycerides. In Laticauda semifasciata (Black-banded sea krait), this protein is Acidic phospholipase A2 1.